A 235-amino-acid chain; its full sequence is Octanoyltransferase (235 aa).

Residues 30-214 (NELEDTLLLL…YFGKVFGAKF (185 aa)) enclose the BPL/LPL catalytic domain. Substrate-binding positions include 75-82 (RGGDVTYH), 144-146 (AIG), and 157-159 (GFA). The active-site Acyl-thioester intermediate is C175.

This sequence belongs to the LipB family.

It is found in the cytoplasm. It catalyses the reaction octanoyl-[ACP] + L-lysyl-[protein] = N(6)-octanoyl-L-lysyl-[protein] + holo-[ACP] + H(+). It participates in protein modification; protein lipoylation via endogenous pathway; protein N(6)-(lipoyl)lysine from octanoyl-[acyl-carrier-protein]: step 1/2. Its function is as follows. Catalyzes the transfer of endogenously produced octanoic acid from octanoyl-acyl-carrier-protein onto the lipoyl domains of lipoate-dependent enzymes. Lipoyl-ACP can also act as a substrate although octanoyl-ACP is likely to be the physiological substrate. The protein is Octanoyltransferase of Caldicellulosiruptor saccharolyticus (strain ATCC 43494 / DSM 8903 / Tp8T 6331).